A 282-amino-acid polypeptide reads, in one-letter code: Nudix hydrolase 7 (282 aa).

The Nudix hydrolase domain occupies 101–233; it reads SHVVGAGALV…KNEMFKFMAN (133 aa). Residues 139–160 carry the Nudix box motif; the sequence is GVINEGEDIWTGVAREVEEETG. E154 and E158 together coordinate Mg(2+).

It belongs to the Nudix hydrolase family. Homodimer. Interacts with RACK1A, GG1 and GG2. The cofactor is Mg(2+). In terms of tissue distribution, expressed in stems, leaves, roots, flowers and siliques.

The protein resides in the nucleus. The protein localises to the cytoplasm. It is found in the cell membrane. The catalysed reaction is ADP-D-ribose + H2O = D-ribose 5-phosphate + AMP + 2 H(+). It carries out the reaction NAD(+) + H2O = beta-nicotinamide D-ribonucleotide + AMP + 2 H(+). It catalyses the reaction NADH + H2O = reduced beta-nicotinamide D-ribonucleotide + AMP + 2 H(+). With respect to regulation, not inhibited by fluoride. Its function is as follows. Mediates the hydrolysis of some nucleoside diphosphate derivatives. Can use both NADH and ADP-ribose as substrates, but not 8-oxo-dGTP, cyclic ADP-ribose, GDP-mannose, UDP-glucose, ATP, or GTP. Exerts negative control of EDS1 signaling. This chain is Nudix hydrolase 7 (NUDT7), found in Arabidopsis thaliana (Mouse-ear cress).